Reading from the N-terminus, the 277-residue chain is Phosphate import ATP-binding protein PstB 2 (277 aa).

Positions Ile-31 to Ile-272 constitute an ABC transporter domain. Residue Gly-63–Ser-70 participates in ATP binding.

Belongs to the ABC transporter superfamily. Phosphate importer (TC 3.A.1.7) family. As to quaternary structure, the complex is composed of two ATP-binding proteins (PstB), two transmembrane proteins (PstC and PstA) and a solute-binding protein (PstS).

The protein localises to the cell inner membrane. It carries out the reaction phosphate(out) + ATP + H2O = ADP + 2 phosphate(in) + H(+). Part of the ABC transporter complex PstSACB involved in phosphate import. Responsible for energy coupling to the transport system. This Pseudomonas syringae pv. tomato (strain ATCC BAA-871 / DC3000) protein is Phosphate import ATP-binding protein PstB 2.